The following is a 365-amino-acid chain: MFSVLDWKPKIGILGGGQLGWMIVLEGRKYPFTFYVLENDKNAPACRIADRCFSPQDYKEFVDSSDVITFEFEHVYEKALEYAEYSGKLLPRLNSVELKRERYKEKLFYRQHNLPTPRFYVAEDGEEALKILREEFNNVGVIKESKGGYDGKGQYFIFNDVEKYQFLREKKEKMVVEEYVKFDFEASIIIARDKRGVFISYPPTYNYNEKGILVYNYGPYNNQNIVEIARRLSEELDYVGIMGVEVFVVNGKVLINEFAPRVHNTGHYTLDGALISQFEQHLRAIIGMELGPSTILSPSGMVNILGTDKIPVEVLKYGKVYWYSKSEVRKRRKMGHVNVVGNNLEEVKQKIDKIMQLIYTNGLDL.

Residues Arg102, Lys143, 148 to 154 (GYDGKGQ), 177 to 180 (EEYV), Glu185, and 256 to 257 (NE) each bind ATP. The 181-residue stretch at 106–286 (KLFYRQHNLP…QFEQHLRAII (181 aa)) folds into the ATP-grasp domain.

The protein belongs to the PurK/PurT family. In terms of assembly, homodimer.

The catalysed reaction is 5-amino-1-(5-phospho-beta-D-ribosyl)imidazole + hydrogencarbonate + ATP = 5-carboxyamino-1-(5-phospho-D-ribosyl)imidazole + ADP + phosphate + 2 H(+). The protein operates within purine metabolism; IMP biosynthesis via de novo pathway; 5-amino-1-(5-phospho-D-ribosyl)imidazole-4-carboxylate from 5-amino-1-(5-phospho-D-ribosyl)imidazole (N5-CAIR route): step 1/2. Functionally, catalyzes the ATP-dependent conversion of 5-aminoimidazole ribonucleotide (AIR) and HCO(3)(-) to N5-carboxyaminoimidazole ribonucleotide (N5-CAIR). The protein is N5-carboxyaminoimidazole ribonucleotide synthase of Saccharolobus solfataricus (strain ATCC 35092 / DSM 1617 / JCM 11322 / P2) (Sulfolobus solfataricus).